The chain runs to 382 residues: 1-deoxy-D-xylulose 5-phosphate reductoisomerase (382 aa).

NADPH-binding residues include T10, G11, S12, I13, N38, and N120. K121 contributes to the 1-deoxy-D-xylulose 5-phosphate binding site. E122 contributes to the NADPH binding site. D146 is a Mn(2+) binding site. Positions 147, 148, 172, and 195 each coordinate 1-deoxy-D-xylulose 5-phosphate. E148 contacts Mn(2+). G201 is a binding site for NADPH. Residues S208, N213, K214, and E217 each coordinate 1-deoxy-D-xylulose 5-phosphate. E217 lines the Mn(2+) pocket.

It belongs to the DXR family. Requires Mg(2+) as cofactor. Mn(2+) serves as cofactor.

It carries out the reaction 2-C-methyl-D-erythritol 4-phosphate + NADP(+) = 1-deoxy-D-xylulose 5-phosphate + NADPH + H(+). It functions in the pathway isoprenoid biosynthesis; isopentenyl diphosphate biosynthesis via DXP pathway; isopentenyl diphosphate from 1-deoxy-D-xylulose 5-phosphate: step 1/6. Catalyzes the NADPH-dependent rearrangement and reduction of 1-deoxy-D-xylulose-5-phosphate (DXP) to 2-C-methyl-D-erythritol 4-phosphate (MEP). The polypeptide is 1-deoxy-D-xylulose 5-phosphate reductoisomerase (Thermoanaerobacter pseudethanolicus (strain ATCC 33223 / 39E) (Clostridium thermohydrosulfuricum)).